The sequence spans 89 residues: Elongation factor 1-beta (89 aa).

The protein belongs to the EF-1-beta/EF-1-delta family.

In terms of biological role, promotes the exchange of GDP for GTP in EF-1-alpha/GDP, thus allowing the regeneration of EF-1-alpha/GTP that could then be used to form the ternary complex EF-1-alpha/GTP/AAtRNA. This chain is Elongation factor 1-beta, found in Methanosarcina mazei (strain ATCC BAA-159 / DSM 3647 / Goe1 / Go1 / JCM 11833 / OCM 88) (Methanosarcina frisia).